The primary structure comprises 279 residues: Fatty acid metabolism regulator protein (279 aa).

Positions 6-74 constitute an HTH gntR-type domain; the sequence is KSPAGFAEKY…HGKPTKVNQF (69 aa). The segment at residues 34–53 is a DNA-binding region (H-T-H motif); sequence ERELSELIGVTRTTLREVLQ.

Homodimer.

It localises to the cytoplasm. In terms of biological role, multifunctional regulator of fatty acid metabolism. This is Fatty acid metabolism regulator protein from Vibrio cholerae serotype O1 (strain ATCC 39541 / Classical Ogawa 395 / O395).